The following is a 311-amino-acid chain: Pyrimidine-specific ribonucleoside hydrolase RihA (311 aa).

Residue His-240 is part of the active site.

It belongs to the IUNH family. RihA subfamily.

Functionally, hydrolyzes cytidine or uridine to ribose and cytosine or uracil, respectively. The sequence is that of Pyrimidine-specific ribonucleoside hydrolase RihA from Salmonella gallinarum (strain 287/91 / NCTC 13346).